The following is a 165-amino-acid chain: 2-C-methyl-D-erythritol 2,4-cyclodiphosphate synthase (165 aa).

The a divalent metal cation site is built by Asp12 and His14. 4-CDP-2-C-methyl-D-erythritol 2-phosphate is bound by residues 12-14 and 38-39; these read DVH and HS. His46 is a binding site for a divalent metal cation. 4-CDP-2-C-methyl-D-erythritol 2-phosphate is bound by residues 60 to 62, 65 to 69, Phe143, and Arg146; these read DIG and FPDTD.

It belongs to the IspF family. In terms of assembly, homotrimer. The cofactor is a divalent metal cation.

The catalysed reaction is 4-CDP-2-C-methyl-D-erythritol 2-phosphate = 2-C-methyl-D-erythritol 2,4-cyclic diphosphate + CMP. It functions in the pathway isoprenoid biosynthesis; isopentenyl diphosphate biosynthesis via DXP pathway; isopentenyl diphosphate from 1-deoxy-D-xylulose 5-phosphate: step 4/6. Involved in the biosynthesis of isopentenyl diphosphate (IPP) and dimethylallyl diphosphate (DMAPP), two major building blocks of isoprenoid compounds. Catalyzes the conversion of 4-diphosphocytidyl-2-C-methyl-D-erythritol 2-phosphate (CDP-ME2P) to 2-C-methyl-D-erythritol 2,4-cyclodiphosphate (ME-CPP) with a corresponding release of cytidine 5-monophosphate (CMP). This Aromatoleum aromaticum (strain DSM 19018 / LMG 30748 / EbN1) (Azoarcus sp. (strain EbN1)) protein is 2-C-methyl-D-erythritol 2,4-cyclodiphosphate synthase.